The primary structure comprises 168 residues: Putative postmeiotic segregation increased 2-like protein 3 (168 aa).

The KRAB domain occupies 8-84 (VSFKDVAVDF…EGEFPCQHSP (77 aa)).

This sequence belongs to the DNA mismatch repair MutL/HexB family.

The chain is Putative postmeiotic segregation increased 2-like protein 3 (PMS2P3) from Homo sapiens (Human).